A 1447-amino-acid chain; its full sequence is Sister chromatid cohesion protein PDS5 homolog B (1447 aa).

The stretch at 383-419 (LLVNDHLLNFVRERTLDKRWRVRKEAMMGLAQIYKKY) is one HEAT repeat. Lysine 1136 is subject to N6-acetyllysine. Over residues 1137 to 1155 (PLSSAGKQSQTKSSRMETV) the composition is skewed to polar residues. The tract at residues 1137–1447 (PLSSAGKQSQ…RRRSSKRERR (311 aa)) is disordered. Phosphoserine is present on residues serine 1140, serine 1162, serine 1166, serine 1176, serine 1182, and serine 1191. Over residues 1156–1167 (SNASSSSNPSSP) the composition is skewed to low complexity. The segment covering 1172-1184 (GRLDSTEMDHSEN) has biased composition (basic and acidic residues). A compositionally biased stretch (basic and acidic residues) spans 1196–1214 (KKSDKREDSDLVRSELEKP). Serine 1221 is subject to Phosphoserine. A compositionally biased stretch (basic and acidic residues) spans 1225-1243 (PEEKLGMDDLSKLVQEQKP). Over residues 1245 to 1254 (GSQRGRKRGH) the composition is skewed to basic residues. The a.T hook 1 DNA-binding region spans 1247 to 1259 (QRGRKRGHAASES). Phosphoserine is present on residues serine 1257 and serine 1259. Residues 1265–1274 (PEEKRHKEEL) are compositionally biased toward basic and acidic residues. A Phosphoserine modification is found at serine 1283. The segment at residues 1287–1299 (KGKRGRPPKPLGG) is a DNA-binding region (a.T hook 2). Basic residues-rich tracts occupy residues 1309 to 1318 (TSKKGNKKKP) and 1341 to 1352 (KSKQQRTSKRAQ). 2 positions are modified to phosphoserine: serine 1357 and serine 1365. The span at 1358-1371 (PETSAVESTQSTPQ) shows a compositional bias: polar residues. Threonine 1366 is modified (phosphothreonine). A Phosphoserine modification is found at serine 1368. 2 positions are modified to phosphothreonine: threonine 1369 and threonine 1380. Residues 1371–1383 (QKGRGRPSKTPSP) constitute a DNA-binding region (a.T hook 3). Positions 1378–1387 (SKTPSPSQPK) are enriched in low complexity. 3 positions are modified to phosphoserine: serine 1382, serine 1416, and serine 1419. A compositionally biased stretch (acidic residues) spans 1422 to 1432 (TTQEGAEEEDI). A compositionally biased stretch (basic residues) spans 1437 to 1447 (VRRRSSKRERR).

Belongs to the PDS5 family. Interacts with the cohesin complex. Interacts with RAD21; the interaction is direct. Interacts with WAPL (via FGF motifs) or CDCA5 (via the FGF motif); the interaction is direct, cohesin-dependent and competitive. As to expression, highly expressed in intact prostate with levels decreasing after castration. Expressed exclusively in prostate cells inhibited from proliferating by long-term androgen exposure.

The protein localises to the nucleus. Functionally, regulator of sister chromatid cohesion in mitosis which may stabilize cohesin complex association with chromatin. May couple sister chromatid cohesion during mitosis to DNA replication. Cohesion ensures that chromosome partitioning is accurate in both meiotic and mitotic cells and plays an important role in DNA repair. Plays a role in androgen-induced proliferative arrest in prostate cells. In Rattus norvegicus (Rat), this protein is Sister chromatid cohesion protein PDS5 homolog B (Pds5b).